A 122-amino-acid polypeptide reads, in one-letter code: ATP synthase epsilon chain (122 aa).

The span at Glu97–Ala112 shows a compositional bias: basic and acidic residues. Residues Glu97–Ser122 are disordered.

Belongs to the ATPase epsilon chain family. As to quaternary structure, F-type ATPases have 2 components, CF(1) - the catalytic core - and CF(0) - the membrane proton channel. CF(1) has five subunits: alpha(3), beta(3), gamma(1), delta(1), epsilon(1). CF(0) has three main subunits: a, b and c.

It localises to the cell membrane. Produces ATP from ADP in the presence of a proton gradient across the membrane. This Corynebacterium aurimucosum (strain ATCC 700975 / DSM 44827 / CIP 107346 / CN-1) (Corynebacterium nigricans) protein is ATP synthase epsilon chain.